The sequence spans 72 residues: MAKEGAIEVEGRIIEPLPNAMFRVELDNGHKVLAHISGKMRQHYIRILPEDRVVVELSPYDLTRGRIVYRYK.

The S1-like domain occupies 1 to 72 (MAKEGAIEVE…TRGRIVYRYK (72 aa)).

This sequence belongs to the IF-1 family. In terms of assembly, component of the 30S ribosomal translation pre-initiation complex which assembles on the 30S ribosome in the order IF-2 and IF-3, IF-1 and N-formylmethionyl-tRNA(fMet); mRNA recruitment can occur at any time during PIC assembly.

Its subcellular location is the cytoplasm. One of the essential components for the initiation of protein synthesis. Stabilizes the binding of IF-2 and IF-3 on the 30S subunit to which N-formylmethionyl-tRNA(fMet) subsequently binds. Helps modulate mRNA selection, yielding the 30S pre-initiation complex (PIC). Upon addition of the 50S ribosomal subunit IF-1, IF-2 and IF-3 are released leaving the mature 70S translation initiation complex. This chain is Translation initiation factor IF-1, found in Corynebacterium diphtheriae (strain ATCC 700971 / NCTC 13129 / Biotype gravis).